The chain runs to 397 residues: Tryptophan synthase beta chain (397 aa).

Lys-91 bears the N6-(pyridoxal phosphate)lysine mark.

It belongs to the TrpB family. In terms of assembly, tetramer of two alpha and two beta chains. Pyridoxal 5'-phosphate is required as a cofactor.

It carries out the reaction (1S,2R)-1-C-(indol-3-yl)glycerol 3-phosphate + L-serine = D-glyceraldehyde 3-phosphate + L-tryptophan + H2O. The protein operates within amino-acid biosynthesis; L-tryptophan biosynthesis; L-tryptophan from chorismate: step 5/5. Functionally, the beta subunit is responsible for the synthesis of L-tryptophan from indole and L-serine. The chain is Tryptophan synthase beta chain from Bacillus cereus (strain ATCC 14579 / DSM 31 / CCUG 7414 / JCM 2152 / NBRC 15305 / NCIMB 9373 / NCTC 2599 / NRRL B-3711).